Consider the following 94-residue polypeptide: Surfactant-associated protein 3 (94 aa).

In terms of tissue distribution, found in lung alveolar cells type I and II, as well as alveolar macrophages (at protein level). Detected also in testis and kidney. Expressed by different tissues of the ocular system like cornea, conjuctiva, lacrimal gland, eyelid and efferent tear ducts (at protein level). From these tissues is secreted into the tear film (at protein level).

The protein localises to the cytoplasm. The protein resides in the secreted. Functionally, putative surfactant protein. May be involved in wound healing and in the reduction of the surface tension at the ocular surface. The polypeptide is Surfactant-associated protein 3 (SFTA3) (Homo sapiens (Human)).